Here is an 84-residue protein sequence, read N- to C-terminus: Small ribosomal subunit protein bS16 (84 aa).

Belongs to the bacterial ribosomal protein bS16 family.

This chain is Small ribosomal subunit protein bS16, found in Endomicrobium trichonymphae.